The chain runs to 376 residues: Lipoyl synthase 2, mitochondrial (376 aa).

[4Fe-4S] cluster is bound by residues cysteine 109, cysteine 114, cysteine 120, cysteine 140, cysteine 144, cysteine 147, and serine 356. The 221-residue stretch at 125–345 (ETGTATATIM…QTLGMEMGFR (221 aa)) folds into the Radical SAM core domain.

It belongs to the radical SAM superfamily. Lipoyl synthase family. [4Fe-4S] cluster serves as cofactor.

The protein localises to the mitochondrion. The catalysed reaction is [[Fe-S] cluster scaffold protein carrying a second [4Fe-4S](2+) cluster] + N(6)-octanoyl-L-lysyl-[protein] + 2 oxidized [2Fe-2S]-[ferredoxin] + 2 S-adenosyl-L-methionine + 4 H(+) = [[Fe-S] cluster scaffold protein] + N(6)-[(R)-dihydrolipoyl]-L-lysyl-[protein] + 4 Fe(3+) + 2 hydrogen sulfide + 2 5'-deoxyadenosine + 2 L-methionine + 2 reduced [2Fe-2S]-[ferredoxin]. It functions in the pathway protein modification; protein lipoylation via endogenous pathway; protein N(6)-(lipoyl)lysine from octanoyl-[acyl-carrier-protein]: step 2/2. Catalyzes the radical-mediated insertion of two sulfur atoms into the C-6 and C-8 positions of the octanoyl moiety bound to the lipoyl domains of lipoate-dependent enzymes, thereby converting the octanoylated domains into lipoylated derivatives. The sequence is that of Lipoyl synthase 2, mitochondrial from Pisum sativum (Garden pea).